The following is a 445-amino-acid chain: Trimethylamine monooxygenase (445 aa).

Positions 14, 39, 41, 47, 48, and 64 each coordinate FAD. Positions 72 and 74 each coordinate NADP(+). Residues Asn-74 and Val-127 each coordinate FAD. NADP(+)-binding residues include Thr-204, Ser-205, Ser-207, and Arg-228. Residues Gln-317 and Thr-320 each contribute to the FAD site. Arg-411 contacts NADP(+).

This sequence belongs to the FMO family. It depends on FAD as a cofactor.

It carries out the reaction trimethylamine + NADPH + O2 = trimethylamine N-oxide + NADP(+) + H2O. Functionally, catalyzes the oxidation of trimethylamine (TMA) to produce trimethylamine N-oxide (TMAO). In vitro, has a broad substrate specificity, oxidizing many nitrogen- and sulfur-containing compounds, including dimethylamine (DMA), dimethylsulfide (DMS) and dimethylsulfoxide (DMSO). In Roseovarius sp. (strain 217), this protein is Trimethylamine monooxygenase.